The chain runs to 1396 residues: G2/mitotic-specific cyclin-B3 (1396 aa).

Disordered regions lie at residues 1-64 (MPPP…TNAS), 259-398 (KEKP…PQME), and 477-500 (TTEKDPPSQWPSALPKKHISPGEL). Residues 10-34 (SKLETEKAQSNKITPREEQQSEKIG) are compositionally biased toward basic and acidic residues. A D-box motif is present at residues 54 to 62 (RSVFEDVTN). Basic residues predominate over residues 264–273 (VKKPHFRKKK). Residues 306 to 315 (LQENTNNKDA) are compositionally biased toward polar residues. Phosphoserine is present on serine 703. The disordered stretch occupies residues 775–796 (VDEPLSHQSPHIQNHSDTTKEA). Residues 780 to 790 (SHQSPHIQNHS) show a composition bias toward polar residues.

It belongs to the cyclin family. Cyclin AB subfamily. Interacts with CDK2 kinase. In terms of processing, ubiquitinated. Ubiquitination leads to its degradation during anaphase entry, after degradation of CCNB1. Expressed in testis. Also expressed in the fetal ovary, but not in the adult.

The protein resides in the nucleus. Cyclins are positive regulatory subunits of the cyclin-dependent kinases (CDKs), and thereby play an essential role in the control of the cell cycle, notably via their destruction during cell division. Its tissue specificity suggest that it may be required during early meiotic prophase I. This Mus musculus (Mouse) protein is G2/mitotic-specific cyclin-B3 (Ccnb3).